Reading from the N-terminus, the 337-residue chain is Anthranilate phosphoribosyltransferase (337 aa).

Residues Gly82, 85–86 (GD), Thr90, 92–95 (NIST), 110–118 (KHGGRSVSS), and Ser122 contribute to the 5-phospho-alpha-D-ribose 1-diphosphate site. Position 82 (Gly82) interacts with anthranilate. Ser94 contributes to the Mg(2+) binding site. Arg168 is a binding site for anthranilate. Mg(2+)-binding residues include Asp226 and Glu227.

This sequence belongs to the anthranilate phosphoribosyltransferase family. In terms of assembly, homodimer. Requires Mg(2+) as cofactor.

It carries out the reaction N-(5-phospho-beta-D-ribosyl)anthranilate + diphosphate = 5-phospho-alpha-D-ribose 1-diphosphate + anthranilate. Its pathway is amino-acid biosynthesis; L-tryptophan biosynthesis; L-tryptophan from chorismate: step 2/5. Catalyzes the transfer of the phosphoribosyl group of 5-phosphorylribose-1-pyrophosphate (PRPP) to anthranilate to yield N-(5'-phosphoribosyl)-anthranilate (PRA). The chain is Anthranilate phosphoribosyltransferase from Francisella tularensis subsp. mediasiatica (strain FSC147).